The chain runs to 367 residues: UDP-N-acetylglucosamine--N-acetylmuramyl-(pentapeptide) pyrophosphoryl-undecaprenol N-acetylglucosamine transferase (367 aa).

UDP-N-acetyl-alpha-D-glucosamine is bound by residues 15 to 17 (TGG), asparagine 127, arginine 163, serine 191, isoleucine 249, and glutamine 294.

The protein belongs to the glycosyltransferase 28 family. MurG subfamily.

The protein localises to the cell inner membrane. The enzyme catalyses di-trans,octa-cis-undecaprenyl diphospho-N-acetyl-alpha-D-muramoyl-L-alanyl-D-glutamyl-meso-2,6-diaminopimeloyl-D-alanyl-D-alanine + UDP-N-acetyl-alpha-D-glucosamine = di-trans,octa-cis-undecaprenyl diphospho-[N-acetyl-alpha-D-glucosaminyl-(1-&gt;4)]-N-acetyl-alpha-D-muramoyl-L-alanyl-D-glutamyl-meso-2,6-diaminopimeloyl-D-alanyl-D-alanine + UDP + H(+). The protein operates within cell wall biogenesis; peptidoglycan biosynthesis. In terms of biological role, cell wall formation. Catalyzes the transfer of a GlcNAc subunit on undecaprenyl-pyrophosphoryl-MurNAc-pentapeptide (lipid intermediate I) to form undecaprenyl-pyrophosphoryl-MurNAc-(pentapeptide)GlcNAc (lipid intermediate II). This chain is UDP-N-acetylglucosamine--N-acetylmuramyl-(pentapeptide) pyrophosphoryl-undecaprenol N-acetylglucosamine transferase, found in Burkholderia ambifaria (strain MC40-6).